Reading from the N-terminus, the 1041-residue chain is Toll-like receptor 8 (1041 aa).

The first 26 residues, 1–26 (MENMFLQSSMLTCIFLLISGSCELCA), serve as a signal peptide directing secretion. The Extracellular portion of the chain corresponds to 27-827 (EENFSRSYPC…ELTTCVSDVT (801 aa)). N29, N42, N80, N88, and N115 each carry an N-linked (GlcNAc...) asparagine glycan. An intrachain disulfide couples C36 to C49. LRR repeat units follow at residues 126-147 (NLRELLLEDNQLPQIPSGLPES), 148-168 (LTELSLIQNNIYNITKEGISR), 171-193 (NLKNLYLAWNCYFNKVCEKTNIE), 202-223 (NLELLSLSFNSLSHVPPKLPSS), 224-244 (LRKLFLSNTQIKYISEEDFKG), and 247-268 (NLTLLDLSGNCPRCFNAPFPCV). N160 is a glycosylation site (N-linked (GlcNAc...) asparagine). C181 and C187 are joined by a disulfide. The N-linked (GlcNAc...) asparagine glycan is linked to N247. 2 cysteine pairs are disulfide-bonded: C257/C270 and C260/C267. N-linked (GlcNAc...) asparagine glycosylation is found at N285 and N293. 3 LRR repeats span residues 288 to 309 (QLRYLNLSSTSLRKINAAWFKN), 312 to 334 (HLKVLDLEFNYLVGEIASGAFLT), and 338 to 360 (RLEILDLSFNYIKGSYPQHINIS). N-linked (GlcNAc...) asparagine glycosylation is found at N358 and N362. LRR repeat units lie at residues 368 to 389 (SLRALHLRGYVFQELREDDFQP), 395 to 416 (NLSTINLGINFIKQIDFKLFQN), and 419 to 440 (NLEIIYLSENRISPLVKDTRQS). Residues N395 and N416 are each glycosylated (N-linked (GlcNAc...) asparagine). N-linked (GlcNAc...) asparagine glycosylation is present at N443. The cysteines at positions 479 and 509 are disulfide-linked. LRR repeat units lie at residues 482–503 (YGKALDLSLNSIFFIGPNQFEN), 506–527 (DIACLNLSANSNAQVLSGTEFS), 531–551 (HVKYLDLTNNRLDFDNASALT), and 555–577 (DLEVLDLSYNSHYFRIAGVTHHL). N-linked (GlcNAc...) asparagine glycosylation is found at N511 and N546. Residues N582 and N590 are each glycosylated (N-linked (GlcNAc...) asparagine). LRR repeat units follow at residues 585–606 (NLKVLNLSHNNIYTLTDKYNLE), 609–630 (SLVELVFSGNRLDILWNDDDNR), 640–661 (NLTRLDLSLNRLKHIPNEAFLN), 665–685 (SLTELHINDNMLKFFNWTLLQ), 689–710 (RLELLDLRGNKLLFLTDSLSDF), 713–734 (SLRTLLLSHNRISHLPSGFLSE), and 737–758 (SLKHLDLSSNLLKTINKSALET). N640 and N680 each carry an N-linked (GlcNAc...) asparagine glycan. N752 is a glycosylation site (N-linked (GlcNAc...) asparagine). In terms of domain architecture, LRRCT spans 772 to 824 (NPFECTCDIGDFRRWMDEHLNVKIPRLVDVICASPGDQRGKSIVSLELTTCVS). C776 and C803 form a disulfide bridge. Residues 828–848 (AVILFFFTFFITTMVMLAALA) form a helical membrane-spanning segment. The Cytoplasmic portion of the chain corresponds to 849 to 1041 (HHLFYWDVWF…NMYVDSIKQY (193 aa)). The TIR domain occupies 878–1022 (TFYDAYISYD…LFWQTLRNVV (145 aa)).

This sequence belongs to the Toll-like receptor family. Homodimer. Interacts with MYD88 via their respective TIR domains. Interacts with UNC93B1. Interacts with BTK. Interacts with SMPDL3B. Post-translationally, ubiquitinated by RNF216; leading to degradation by the proteasome. In terms of processing, proteolytic processing occurs in monocytes and monocyte-derived macrophages by both furin-like proprotein convertase and cathepsins. The cleavage is necessary for dimer formation and subsequent activation. Expressed in myeloid dendritic cells, monocytes, and monocyte-derived dendritic cells.

The protein resides in the endosome membrane. Its activity is regulated as follows. Activated by RNAs having enough uridines. Functionally, endosomal receptor that plays a key role in innate and adaptive immunity. Controls host immune response against pathogens through recognition of RNA degradation products specific to microorganisms that are initially processed by RNASET2. Recognizes GU-rich single-stranded RNA (GU-rich RNA) derived from SARS-CoV-2, SARS-CoV-1 and HIV-1 viruses. Upon binding to agonists, undergoes dimerization that brings TIR domains from the two molecules into direct contact, leading to the recruitment of TIR-containing downstream adapter MYD88 through homotypic interaction. In turn, the Myddosome signaling complex is formed involving IRAK4, IRAK1, TRAF6, TRAF3 leading to activation of downstream transcription factors NF-kappa-B and IRF7 to induce pro-inflammatory cytokines and interferons, respectively. The chain is Toll-like receptor 8 from Homo sapiens (Human).